The sequence spans 390 residues: Centrosomal protein of 44 kDa (390 aa).

The binds with microtubules and centrioles stretch occupies residues 11-195 (RNLEQVLRLL…ISEDTLSPIT (185 aa)). A coiled-coil region spans residues 233 to 267 (EITALQTMLAECQEKLKELTLIEKRLDCLEQKMKG). The interval 323-347 (KNKVGRPASIPLSSRYSTASSDSTP) is disordered. Residues Ser331 and Ser345 each carry the phosphoserine modification. The span at 335–345 (SSRYSTASSDS) shows a compositional bias: low complexity. The residue at position 346 (Thr346) is a Phosphothreonine. Positions 361 to 385 (SEETTIQKMERMKKMFEETAELLKC) form a coiled coil.

Interacts with CROCC. Interacts with POC1B; the interaction is direct and recruits POC1B to centriolar microtubules. Binds to centriolar microtubules.

The protein localises to the cytoplasm. The protein resides in the cytoskeleton. It localises to the microtubule organizing center. Its subcellular location is the centrosome. It is found in the centriole. The protein localises to the spindle pole. The protein resides in the midbody. Its function is as follows. Centriole-enriched microtubule-binding protein involved in centriole biogenesis. In collaboration with CEP295 and POC1B, is required for the centriole-to-centrosome conversion by ensuring the formation of bona fide centriole wall. Functions as a linker component that maintains centrosome cohesion. Associates with CROCC and regulates its stability and localization to the centrosome. The chain is Centrosomal protein of 44 kDa (CEP44) from Macaca fascicularis (Crab-eating macaque).